We begin with the raw amino-acid sequence, 189 residues long: MKELKPAILMLIIFTILCGGIYPAVVTGIAQAVFPKQAKGSLITDARGREVGSTLIGQPFSGPKYFWPRPSATPEFGYNPAGSGGSNAGPANPAYLKTVGERIKALRDAGIKGSIPADLVQASASGLDPHISPEAAKVQIPRVARARGMSAGALSRLIAAHTEDRQLGFLGEPRINVLALNLALDTLMP.

The helical transmembrane segment at 6–26 (PAILMLIIFTILCGGIYPAVV) threads the bilayer.

Belongs to the KdpC family. In terms of assembly, the system is composed of three essential subunits: KdpA, KdpB and KdpC.

Its subcellular location is the cell inner membrane. Functionally, part of the high-affinity ATP-driven potassium transport (or Kdp) system, which catalyzes the hydrolysis of ATP coupled with the electrogenic transport of potassium into the cytoplasm. This subunit acts as a catalytic chaperone that increases the ATP-binding affinity of the ATP-hydrolyzing subunit KdpB by the formation of a transient KdpB/KdpC/ATP ternary complex. The polypeptide is Potassium-transporting ATPase KdpC subunit (Geobacter sulfurreducens (strain ATCC 51573 / DSM 12127 / PCA)).